The chain runs to 203 residues: Large ribosomal subunit protein bL25 (203 aa).

The tract at residues 182-203 is disordered; that stretch reads EITEEPETEEKKEEGASSVSNS.

This sequence belongs to the bacterial ribosomal protein bL25 family. CTC subfamily. As to quaternary structure, part of the 50S ribosomal subunit; part of the 5S rRNA/L5/L18/L25 subcomplex. Contacts the 5S rRNA. Binds to the 5S rRNA independently of L5 and L18.

In terms of biological role, this is one of the proteins that binds to the 5S RNA in the ribosome where it forms part of the central protuberance. This is Large ribosomal subunit protein bL25 from Caldicellulosiruptor saccharolyticus (strain ATCC 43494 / DSM 8903 / Tp8T 6331).